Consider the following 286-residue polypeptide: Master replication protein (286 aa).

Residues 2–96 form the CRESS-DNA virus Rep endonuclease domain; that stretch reads ARQVICWCFT…LEGPWEYGEF (95 aa). An RCR-1 motif is present at residues 9 to 12; the sequence is CFTL. Residues glutamate 33 and histidine 41 each contribute to the a divalent metal cation site. The short motif at 41–43 is the RCR-2 element; the sequence is HFQ. The Nuclear localization signal signature appears at 50-70; that stretch reads KRTSLAGMKKLIPGAHFEKRR. The active-site For DNA cleavage activity is the tyrosine 79. An RCR-3 motif is present at residues 79–82; sequence YSMK. Residue aspartate 84 participates in a divalent metal cation binding. The Nuclear localization signal motif lies at 96–102; it reads FVPTIED. ATP is bound at residue 186-188; the sequence is GKT.

It belongs to the nanoviridea/circoviridae replication-associated protein family. In terms of assembly, homooligomer (Potential). Rep binds to repeated DNA motifs (iterons). Mg(2+) serves as cofactor. Mn(2+) is required as a cofactor.

Its subcellular location is the host nucleus. The catalysed reaction is ATP + H2O = ADP + phosphate + H(+). Essential for the replication of all genomic viral ssDNA (trans-replication). The closed circular ssDNA genome is first converted to a superhelical dsDNA. Rep binds a specific hairpin at the genome origin of replication. Introduces an endonucleolytic nick within the conserved sequence 5'-A[GT]TATTAC-3' in the intergenic region of the genome, thereby initiating the rolling circle replication (RCR). Following cleavage, binds covalently to the 5'-phosphate of DNA as a tyrosyl ester. The cleavage gives rise to a free 3'-OH that serves as a primer for the cellular DNA polymerase. The polymerase synthesizes the (+) strand DNA by rolling circle mechanism. After one round of replication, a Rep-catalyzed nucleotidyl transfer reaction releases a circular single-stranded virus genome, thereby terminating the replication. Displays origin-specific DNA cleavage, nucleotidyl transferase, ATPase and helicase activities. This Cicer arietinum (Chickpea) protein is Master replication protein (DNA-R).